Here is a 575-residue protein sequence, read N- to C-terminus: Cytochrome P450 monooxygenase opaB (575 aa).

N-linked (GlcNAc...) asparagine glycosylation is present at Asn6. Residues 37 to 57 form a helical membrane-spanning segment; the sequence is FILAAILASIILLIIRNSMLS. N-linked (GlcNAc...) asparagine glycans are attached at residues Asn83 and Asn242. Cys521 is a heme binding site.

This sequence belongs to the cytochrome P450 family. Heme serves as cofactor.

It localises to the membrane. Its pathway is secondary metabolite biosynthesis. In terms of biological role, cytochrome P450 monooxygenase; part of the gene cluster that mediates the biosynthesis of oxepinamides, derivatives of anthranilyl-containing tripeptides that share an oxepin ring and a fused pyrimidinone moiety. The nonribosomal peptide synthetase (NRPS) opaA assembles the quinazolinone core with D-Phe incorporation. The first adenylation domain (A1) of opaA loads and activates anthranilic acid whereas the second A domain (A2) is for activating of L-Phe, which is then converted to D-form by the E domain. The third A domain (A3) is responsible for L-Ile activation and the terminal condensation domain C3 for cyclization and releasing the NRPS product protuboxepin K. The cytochrome P450 monooxygenase opaB then catalyzes alone the oxepin ring formation to convert protuboxepin K into protuboxepin A. The flavoenzyme opaC installs subsequently one hydroxyl group at the oxepin ring, accompanied by double bond migration, to form 15-epi-oxepinamide E. The epimerase opaE changes the D-Phe residue back to L-form, leading to oxepinamide E, which is further methylated at the hydroxyl group at C-12 by the O-methyltransferase OpaF to yield oxepinamide F. The polypeptide is Cytochrome P450 monooxygenase opaB (Aspergillus ustus).